Reading from the N-terminus, the 189-residue chain is ATP synthase subunit delta (189 aa).

It belongs to the ATPase delta chain family. F-type ATPases have 2 components, F(1) - the catalytic core - and F(0) - the membrane proton channel. F(1) has five subunits: alpha(3), beta(3), gamma(1), delta(1), epsilon(1). F(0) has three main subunits: a(1), b(2) and c(10-14). The alpha and beta chains form an alternating ring which encloses part of the gamma chain. F(1) is attached to F(0) by a central stalk formed by the gamma and epsilon chains, while a peripheral stalk is formed by the delta and b chains.

Its subcellular location is the cell inner membrane. Its function is as follows. F(1)F(0) ATP synthase produces ATP from ADP in the presence of a proton or sodium gradient. F-type ATPases consist of two structural domains, F(1) containing the extramembraneous catalytic core and F(0) containing the membrane proton channel, linked together by a central stalk and a peripheral stalk. During catalysis, ATP synthesis in the catalytic domain of F(1) is coupled via a rotary mechanism of the central stalk subunits to proton translocation. Functionally, this protein is part of the stalk that links CF(0) to CF(1). It either transmits conformational changes from CF(0) to CF(1) or is implicated in proton conduction. This is ATP synthase subunit delta from Methylorubrum extorquens (strain PA1) (Methylobacterium extorquens).